The following is a 493-amino-acid chain: UDP-glucose 6-dehydrogenase (493 aa).

NAD(+)-binding positions include 11–16 (GAGYVG), D36, R41, and 89–93 (VNTPT). The segment at 88–110 (SVNTPTKTYGMGKGRAADLKYIE) is disordered. K107 carries the N6-acetyllysine modification. Positions 129–135 (KSTVPVR) are allosteric switch region. 130–132 (STV) provides a ligand contact to NAD(+). Residue E161 is the Proton donor/acceptor of the active site. Residues 161–165 (EFLAE), 220–224 (KLAAN), R260, and 267–273 (KASVGFG) contribute to the substrate site. E165 is an NAD(+) binding site. The active-site Proton donor/acceptor is K220. Catalysis depends on C276, which acts as the Nucleophile. An NAD(+)-binding site is contributed by 276–279 (CFQK). An important for formation of active hexamer structure region spans residues 321–325 (SLFNT). 338 to 339 (FK) lines the substrate pocket. Residue R346 participates in NAD(+) binding. Residue R442 coordinates substrate. The disordered stretch occupies residues 466-493 (VSSKRIPYTPGEIPKFSLQDPPNKKPKV). T474 is modified (phosphothreonine).

This sequence belongs to the UDP-glucose/GDP-mannose dehydrogenase family. In terms of assembly, homohexamer.

It catalyses the reaction UDP-alpha-D-glucose + 2 NAD(+) + H2O = UDP-alpha-D-glucuronate + 2 NADH + 3 H(+). Its pathway is nucleotide-sugar biosynthesis; UDP-alpha-D-glucuronate biosynthesis; UDP-alpha-D-glucuronate from UDP-alpha-D-glucose: step 1/1. With respect to regulation, UDP-alpha-D-xylose (UDX) acts as a feedback inhibitor. It binds at the same site as the substrate, but functions as allosteric inhibitor by triggering a conformation change that disrupts the active hexameric ring structure and gives rise to an inactive, horseshoe-shaped hexamer. In terms of biological role, catalyzes the formation of UDP-alpha-D-glucuronate, a constituent of complex glycosaminoglycans. Required for the biosynthesis of chondroitin sulfate and heparan sulfate. Required for embryonic development via its role in the biosynthesis of glycosaminoglycans. Required for proper brain and neuronal development. This chain is UDP-glucose 6-dehydrogenase (Ugdh), found in Mus musculus (Mouse).